We begin with the raw amino-acid sequence, 190 residues long: MRAFKVKRDTNETKIHLELNIDGTGKYSINTGIPFFNHVLSSFAKHGAFDVILDVLGDLEIDDHHTVEDTGIVLGKAFESIEKNNIKRFGFAIIPMDEAKATVTIDIGGRPYLVGKYNPNTEKIGNFSTENVVHFFESFSNNAKVNMHFEVTGENEHHKVEALFKAFGIAMDMATQPDERKGIVSTKGII.

Belongs to the imidazoleglycerol-phosphate dehydratase family.

The protein resides in the cytoplasm. The enzyme catalyses D-erythro-1-(imidazol-4-yl)glycerol 3-phosphate = 3-(imidazol-4-yl)-2-oxopropyl phosphate + H2O. It participates in amino-acid biosynthesis; L-histidine biosynthesis; L-histidine from 5-phospho-alpha-D-ribose 1-diphosphate: step 6/9. The protein is Imidazoleglycerol-phosphate dehydratase of Methanococcus vannielii (strain ATCC 35089 / DSM 1224 / JCM 13029 / OCM 148 / SB).